An 879-amino-acid chain; its full sequence is Protein translocase subunit SecA (879 aa).

ATP-binding positions include Gln86, Gly104–Thr108, and Asp500. Zn(2+) contacts are provided by Cys863, Cys865, Cys874, and His875.

Belongs to the SecA family. As to quaternary structure, monomer and homodimer. Part of the essential Sec protein translocation apparatus which comprises SecA, SecYEG and auxiliary proteins SecDF-YajC and YidC. Zn(2+) is required as a cofactor.

The protein localises to the cell inner membrane. Its subcellular location is the cytoplasm. The catalysed reaction is ATP + H2O + cellular proteinSide 1 = ADP + phosphate + cellular proteinSide 2.. Part of the Sec protein translocase complex. Interacts with the SecYEG preprotein conducting channel. Has a central role in coupling the hydrolysis of ATP to the transfer of proteins into and across the cell membrane, serving both as a receptor for the preprotein-SecB complex and as an ATP-driven molecular motor driving the stepwise translocation of polypeptide chains across the membrane. This Orientia tsutsugamushi (strain Ikeda) (Rickettsia tsutsugamushi) protein is Protein translocase subunit SecA.